A 35-amino-acid chain; its full sequence is Unknown protein 14 from 2D-PAGE (35 aa).

The segment at 1-35 is disordered; that stretch reads VVXXQTLXDXRGIYGDQGSIGPXXIXGLQGDRDAD.

This Bombyx mori (Silk moth) protein is Unknown protein 14 from 2D-PAGE.